Here is a 978-residue protein sequence, read N- to C-terminus: Sensor histidine kinase TodS (978 aa).

Positions 32–103 (CEEHARIIFD…TQKRLVETAS (72 aa)) constitute a PAS 1 domain. The region spanning 108-162 (VRCDVEILGKSGGREVIAVDFSLLPICNEEGSIVYLLAEGRNITDKKKAEAMLAL) is the PAC 1 domain. The region spanning 187-405 (KVSHELRTPL…LFQVKLPLNA (219 aa)) is the Histidine kinase 1 domain. Position 190 is a phosphohistidine; by autocatalysis (histidine 190). Residues 452–567 (RVLIVEDNPD…ELRARVSNLV (116 aa)) enclose the Response regulatory domain. 4-aspartylphosphate is present on aspartate 500. The region spanning 611-681 (SEARWKAVYE…QRLANLLQGG (71 aa)) is the PAS 2 domain. Residues 685–737 (YSVERSYLCKNGSTIWANASVSLMPQRVGESPVILQIIDDITEKKQAQENLNQ) form the PAC 2 domain. Residues 757 to 974 (YIAHEINQPL…CFLVSIPARQ (218 aa)) form the Histidine kinase 2 domain. A Phosphohistidine modification is found at histidine 760.

Homodimer. Binds as a dimer to a pseudopalindromic sequence. Autophosphorylated. Activation requires a sequential transfer of a phosphate group from a His in the primary transmitter domain, to an Asp in the receiver domain and to a His in the secondary transmitter domain.

Its subcellular location is the cytoplasm. It carries out the reaction ATP + protein L-histidine = ADP + protein N-phospho-L-histidine.. Member of the two-component regulatory system TodS/TodT involved in the regulation of toluene degradation. Phosphorylates TodT via a four-step phosphorelay in response to toluene. The polypeptide is Sensor histidine kinase TodS (todS) (Pseudomonas putida (strain ATCC 700007 / DSM 6899 / JCM 31910 / BCRC 17059 / LMG 24140 / F1)).